Here is a 721-residue protein sequence, read N- to C-terminus: Glycine--tRNA ligase beta subunit (721 aa).

The protein belongs to the class-II aminoacyl-tRNA synthetase family. Tetramer of two alpha and two beta subunits.

It localises to the cytoplasm. It catalyses the reaction tRNA(Gly) + glycine + ATP = glycyl-tRNA(Gly) + AMP + diphosphate. The sequence is that of Glycine--tRNA ligase beta subunit from Sinorhizobium fredii (strain NBRC 101917 / NGR234).